Here is a 352-residue protein sequence, read N- to C-terminus: UDP-N-acetylglucosamine--N-acetylmuramyl-(pentapeptide) pyrophosphoryl-undecaprenol N-acetylglucosamine transferase (352 aa).

UDP-N-acetyl-alpha-D-glucosamine contacts are provided by residues 12-14, N124, R160, S188, and Q287; that span reads TGG.

Belongs to the glycosyltransferase 28 family. MurG subfamily.

It localises to the cell inner membrane. It carries out the reaction di-trans,octa-cis-undecaprenyl diphospho-N-acetyl-alpha-D-muramoyl-L-alanyl-D-glutamyl-meso-2,6-diaminopimeloyl-D-alanyl-D-alanine + UDP-N-acetyl-alpha-D-glucosamine = di-trans,octa-cis-undecaprenyl diphospho-[N-acetyl-alpha-D-glucosaminyl-(1-&gt;4)]-N-acetyl-alpha-D-muramoyl-L-alanyl-D-glutamyl-meso-2,6-diaminopimeloyl-D-alanyl-D-alanine + UDP + H(+). Its pathway is cell wall biogenesis; peptidoglycan biosynthesis. Its function is as follows. Cell wall formation. Catalyzes the transfer of a GlcNAc subunit on undecaprenyl-pyrophosphoryl-MurNAc-pentapeptide (lipid intermediate I) to form undecaprenyl-pyrophosphoryl-MurNAc-(pentapeptide)GlcNAc (lipid intermediate II). The protein is UDP-N-acetylglucosamine--N-acetylmuramyl-(pentapeptide) pyrophosphoryl-undecaprenol N-acetylglucosamine transferase of Dechloromonas aromatica (strain RCB).